Reading from the N-terminus, the 56-residue chain is UPF0434 protein CBUD_1597.1 (56 aa).

Belongs to the UPF0434 family.

This chain is UPF0434 protein CBUD_1597.1, found in Coxiella burnetii (strain Dugway 5J108-111).